The following is a 203-amino-acid chain: MSDKFQDRTMAFAGICQAAYLVQKVARDGTCDEASLRESLQSVLVTDPKQPLEVFGNHLAIRDGYRALVEQLGSDGSQKNAELTRYVVSLIALERKLAKRKDILNMLGERISQIGRQQQHFDLLDEQILANMASIYSDLISPIGPRIQIAGTPLFLQQPLVQHKVRALLLAGIRACVLWRQLDGSRTQIIFARKKMVELAKRF.

It belongs to the HflD family.

It localises to the cytoplasm. Its subcellular location is the cell inner membrane. The polypeptide is High frequency lysogenization protein HflD homolog (Aeromonas salmonicida (strain A449)).